The primary structure comprises 311 residues: Lipoyl synthase (311 aa).

[4Fe-4S] cluster is bound by residues C47, C52, C58, C73, C77, C80, and S286. A Radical SAM core domain is found at 59–276 (WSRHTATYLA…RSVGESLGLF (218 aa)).

Belongs to the radical SAM superfamily. Lipoyl synthase family. The cofactor is [4Fe-4S] cluster.

It localises to the cytoplasm. The enzyme catalyses [[Fe-S] cluster scaffold protein carrying a second [4Fe-4S](2+) cluster] + N(6)-octanoyl-L-lysyl-[protein] + 2 oxidized [2Fe-2S]-[ferredoxin] + 2 S-adenosyl-L-methionine + 4 H(+) = [[Fe-S] cluster scaffold protein] + N(6)-[(R)-dihydrolipoyl]-L-lysyl-[protein] + 4 Fe(3+) + 2 hydrogen sulfide + 2 5'-deoxyadenosine + 2 L-methionine + 2 reduced [2Fe-2S]-[ferredoxin]. It participates in protein modification; protein lipoylation via endogenous pathway; protein N(6)-(lipoyl)lysine from octanoyl-[acyl-carrier-protein]: step 2/2. Catalyzes the radical-mediated insertion of two sulfur atoms into the C-6 and C-8 positions of the octanoyl moiety bound to the lipoyl domains of lipoate-dependent enzymes, thereby converting the octanoylated domains into lipoylated derivatives. This Chlamydia trachomatis serovar A (strain ATCC VR-571B / DSM 19440 / HAR-13) protein is Lipoyl synthase.